Reading from the N-terminus, the 395-residue chain is Elongation factor Tu (395 aa).

The tr-type G domain maps to 10-205; it reads KPHVNIGTIG…CDTWIPLPPR (196 aa). Residues 19–26 form a G1 region; it reads GHVDHGKT. A GTP-binding site is contributed by 19-26; the sequence is GHVDHGKT. Position 26 (T26) interacts with Mg(2+). Residues 60-64 are G2; it reads GITIN. A G3 region spans residues 81–84; sequence DCPG. GTP-binding positions include 81-85 and 136-139; these read DCPGH and NKCD. The G4 stretch occupies residues 136–139; that stretch reads NKCD. The G5 stretch occupies residues 174–176; the sequence is SAL.

It belongs to the TRAFAC class translation factor GTPase superfamily. Classic translation factor GTPase family. EF-Tu/EF-1A subfamily. Monomer.

It localises to the cytoplasm. It carries out the reaction GTP + H2O = GDP + phosphate + H(+). Functionally, GTP hydrolase that promotes the GTP-dependent binding of aminoacyl-tRNA to the A-site of ribosomes during protein biosynthesis. The chain is Elongation factor Tu from Parabacteroides distasonis (strain ATCC 8503 / DSM 20701 / CIP 104284 / JCM 5825 / NCTC 11152).